The chain runs to 90 residues: UPF0367 protein SYNPCC7002_A0153 (90 aa).

This sequence belongs to the UPF0367 family.

The sequence is that of UPF0367 protein SYNPCC7002_A0153 from Picosynechococcus sp. (strain ATCC 27264 / PCC 7002 / PR-6) (Agmenellum quadruplicatum).